We begin with the raw amino-acid sequence, 102 residues long: Large ribosomal subunit protein uL24 (102 aa).

Belongs to the universal ribosomal protein uL24 family. In terms of assembly, part of the 50S ribosomal subunit.

Functionally, one of two assembly initiator proteins, it binds directly to the 5'-end of the 23S rRNA, where it nucleates assembly of the 50S subunit. In terms of biological role, one of the proteins that surrounds the polypeptide exit tunnel on the outside of the subunit. This is Large ribosomal subunit protein uL24 from Paraburkholderia phytofirmans (strain DSM 17436 / LMG 22146 / PsJN) (Burkholderia phytofirmans).